Reading from the N-terminus, the 830-residue chain is V-type proton ATPase 116 kDa subunit a 3 (830 aa).

The Cytoplasmic portion of the chain corresponds to 1 to 385; the sequence is MGSMFRSEEV…DAYGVGRYQE (385 aa). The segment at 139 to 158 is disordered; the sequence is QLAAAHTDGASERTPLLQAP. Residues 386–404 form a helical membrane-spanning segment; that stretch reads VNPAPYTIITFPFLFAVMF. The Vacuolar portion of the chain corresponds to 405–406; it reads GD. The chain crosses the membrane as a helical span at residues 407–423; that stretch reads VGHGLLMFLFALAMVLA. Residues 424–438 lie on the Cytoplasmic side of the membrane; that stretch reads ENRPAVKAAQNEIWQ. Residues 439-468 traverse the membrane as a helical segment; that stretch reads TFFRGRYLLLLMGLFSIYTGFIYNECFSRA. The Vacuolar portion of the chain corresponds to 469 to 532; that stretch reads TSIFPSGWSV…AANHLSFLNS (64 aa). A helical transmembrane segment spans residues 533 to 552; that stretch reads FKMKMSVILGVVHMAFGVVL. The Cytoplasmic portion of the chain corresponds to 553–570; the sequence is GVFNHVHFGQRHRLLLET. Residues 571–591 traverse the membrane as a helical segment; it reads LPELTFLLGLFGYLVFLVIYK. Residues 592–635 are Vacuolar-facing; sequence WLCVWAARAASAPSILIHFINMFLFSHSPSNRLLYPRQEVVQAT. Residues 636 to 655 traverse the membrane as a helical segment; that stretch reads LVVLALAMVPILLLGTPLHL. At 656–720 the chain is on the cytoplasmic side; that stretch reads LHRHRRRLRR…EVLMHQAIHT (65 aa). The tract at residues 681–701 is disordered; that stretch reads LPDASVNGWSSDEEKAGGLDD. Residues 721–745 traverse the membrane as a helical segment; that stretch reads IEFCLGCVSNTASYLRLWALSLAHA. At 746 to 766 the chain is on the vacuolar side; the sequence is QLSEVLWAMVMRIGLGLGREV. A helical transmembrane segment spans residues 767–807; the sequence is GVAAVVLVPIFAAFAVMTVAILLVMEGLSAFLHALRLHWVE. Residues 808–830 lie on the Cytoplasmic side of the membrane; sequence FQNKFYSGTGYKLSPFTFAATDD.

The protein belongs to the V-ATPase 116 kDa subunit family. V-ATPase is a heteromultimeric enzyme made up of two complexes: the ATP-hydrolytic V1 complex and the proton translocation V0 complex. The V1 complex consists of three catalytic AB heterodimers that form a heterohexamer, three peripheral stalks each consisting of EG heterodimers, one central rotor including subunits D and F, and the regulatory subunits C and H. The proton translocation complex V0 consists of the proton transport subunit a, a ring of proteolipid subunits c9c'', rotary subunit d, subunits e and f, and the accessory subunits ATP6AP1/Ac45 and ATP6AP2/PRR. Isoform long is highly expressed in osteoclastomas. Isoform short is highly expressed in thymus.

The protein localises to the membrane. Its function is as follows. Subunit of the V0 complex of vacuolar(H+)-ATPase (V-ATPase), a multisubunit enzyme composed of a peripheral complex (V1) that hydrolyzes ATP and a membrane integral complex (V0) that translocates protons. V-ATPase is responsible for acidifying and maintaining the pH of intracellular compartments and in some cell types, is targeted to the plasma membrane, where it is responsible for acidifying the extracellular environment. Seems to be directly involved in T-cell activation. This Homo sapiens (Human) protein is V-type proton ATPase 116 kDa subunit a 3 (TCIRG1).